Reading from the N-terminus, the 729-residue chain is Fatty acid oxidation complex subunit alpha (729 aa).

Residues 1 to 189 (MLYQGETLQL…KVGLVDAVVA (189 aa)) form an enoyl-CoA hydratase/isomerase region. Aspartate 296 is a binding site for substrate. Residues 311-729 (EAPKQAAVLG…LSDVSTGQPA (419 aa)) are 3-hydroxyacyl-CoA dehydrogenase. NAD(+) contacts are provided by residues methionine 324, aspartate 343, 400–402 (VVE), lysine 407, and serine 429. Histidine 450 (for 3-hydroxyacyl-CoA dehydrogenase activity) is an active-site residue. Asparagine 453 provides a ligand contact to NAD(+). The substrate site is built by asparagine 500 and tyrosine 660.

It in the N-terminal section; belongs to the enoyl-CoA hydratase/isomerase family. The protein in the C-terminal section; belongs to the 3-hydroxyacyl-CoA dehydrogenase family. In terms of assembly, heterotetramer of two alpha chains (FadB) and two beta chains (FadA).

It carries out the reaction a (3S)-3-hydroxyacyl-CoA + NAD(+) = a 3-oxoacyl-CoA + NADH + H(+). The enzyme catalyses a (3S)-3-hydroxyacyl-CoA = a (2E)-enoyl-CoA + H2O. The catalysed reaction is a 4-saturated-(3S)-3-hydroxyacyl-CoA = a (3E)-enoyl-CoA + H2O. It catalyses the reaction (3S)-3-hydroxybutanoyl-CoA = (3R)-3-hydroxybutanoyl-CoA. It carries out the reaction a (3Z)-enoyl-CoA = a 4-saturated (2E)-enoyl-CoA. The enzyme catalyses a (3E)-enoyl-CoA = a 4-saturated (2E)-enoyl-CoA. The protein operates within lipid metabolism; fatty acid beta-oxidation. Involved in the aerobic and anaerobic degradation of long-chain fatty acids via beta-oxidation cycle. Catalyzes the formation of 3-oxoacyl-CoA from enoyl-CoA via L-3-hydroxyacyl-CoA. It can also use D-3-hydroxyacyl-CoA and cis-3-enoyl-CoA as substrate. This chain is Fatty acid oxidation complex subunit alpha, found in Serratia proteamaculans (strain 568).